The chain runs to 1855 residues: Collagen alpha-1(XXVII) chain (1855 aa).

The N-terminal stretch at 1-48 (MGLARATAGLGPCCPPAPALLGAGLRWGGFLFAWILVSFSCHLASTQG) is a signal peptide. A propeptide spans 49-618 (APEDVDVLQR…PEPTPFLMLM (570 aa)) (N-terminal propeptide). A Laminin G-like domain is found at 81–246 (PSGFIFTQRA…NYCAHLRERC (166 aa)). Residues N281 and N349 are each glycosylated (N-linked (GlcNAc...) asparagine). 4 disordered regions span residues 317–428 (DVSK…SATV), 511–580 (PPLG…SQLS), 617–787 (LMGP…GFPG), and 838–1617 (GGVG…HPVQ). Polar residues-rich tracts occupy residues 382–427 (LSVT…SSAT) and 520–532 (MMPSTRDSTSTPA). Residues 563-573 (TARDASPRDLT) show a composition bias toward basic and acidic residues. 13 consecutive Collagen-like domains span residues 619-673 (GPPG…GDPG), 682-741 (GAKG…PGPV), 751-810 (GYIG…PGPP), 826-885 (GYPG…PGPM), 886-945 (GKAG…EGPM), 946-1005 (GPPG…VGEK), 1006-1047 (GDRG…PGSR), 1048-1105 (GLPG…GAKG), 1108-1155 (GIPG…PGLP), 1156-1215 (GDSG…KGQE), 1216-1275 (GLKG…PGTP), 1276-1330 (GPKG…GEDG), and 1334-1393 (GAPG…KGSK). Residues 619 to 1612 (GPPGSKGDCG…RGRPGPPGPP (994 aa)) are triple-helical region. The segment covering 630–663 (PGPPGLPGLPGSPGPRGPRGPPGPFGNPGLPGPP) has biased composition (pro residues). The span at 708–728 (PGAAGHPGEQGQPGPEGSPGA) shows a compositional bias: low complexity. Low complexity predominate over residues 905 to 918 (FPGDIGPPGDNGPE). Over residues 1027–1036 (GTPGGVGDPG) the composition is skewed to gly residues. Composition is skewed to low complexity over residues 1083-1095 (RGRPGQPGQQGAA), 1121-1131 (LPGEPGSQGPQ), and 1161-1176 (KGDLGPLGPPGEQGLI). 3 stretches are compositionally biased toward basic and acidic residues: residues 1196-1221 (LKGDRGDPGPDGEHGEKGQEGLKGEE), 1320-1332 (KGEKGEQGEDGKT), and 1344-1354 (PVGDRGDRGEP). 2 stretches are compositionally biased toward low complexity: residues 1369-1378 (RGEPGQQGQP) and 1404-1431 (KAGASGRRGTQGLQGLPGPRGVVGRQGP). Collagen-like domains lie at 1433-1492 (GMAG…SGLP), 1493-1552 (GQLG…KGIQ), and 1553-1612 (GPRG…PGPP). A compositionally biased stretch (low complexity) spans 1566–1581 (IIGPPGMLGPSGLPGP). Pro residues predominate over residues 1597 to 1614 (RGPPGPRGRPGPPGPPWH). The propeptide at 1616–1855 (VQFQQDDLEA…RLEVGPACFL (240 aa)) is C-terminal propeptide. The Fibrillar collagen NC1 domain occupies 1655–1855 (GEIFKTLHYL…RLEVGPACFL (201 aa)). Disulfide bonds link C1685-C1717, C1726-C1853, and C1762-C1806. The Ca(2+) site is built by D1703, N1705, C1708, and D1711. The N-linked (GlcNAc...) asparagine glycan is linked to N1764.

Belongs to the fibrillar collagen family.

It localises to the secreted. Its subcellular location is the extracellular space. The protein localises to the extracellular matrix. Its function is as follows. Plays a role during the calcification of cartilage and the transition of cartilage to bone. The sequence is that of Collagen alpha-1(XXVII) chain (Col27a1) from Rattus norvegicus (Rat).